The following is a 629-amino-acid chain: Pentatricopeptide repeat-containing protein At1g63150 (629 aa).

PPR repeat units follow at residues 46-81 (ASGDYREILRNRLSDIIKVDDAVDLFGDMVKSRPFP), 82-116 (SIVEFNKLLSAVAKMNKFELVISLGEQMQTLGISH), 117-151 (DLYTYSIFINCFCRRSQLSLALAVLAKMMKLGYEP), 152-186 (DIVTLSSLLNGYCHSKRISDAVALVDQMVEMGYKP), 187-221 (DTFTFTTLIHGLFLHNKASEAVALVDQMVQRGCQP), 222-256 (DLVTYGTVVNGLCKRGDIDLALNLLNKMEAARIKA), 257-291 (NVVIFNTIIDSLCKYRHVEVAVDLFTEMETKGIRP), 292-326 (NVVTYNSLINCLCNYGRWSDASRLLSNMLEKKINP), 327-361 (NVVTFNALIDAFFKEGKLVEAEKLHEEMIQRSIDP), 362-396 (DTITYNLLINGFCMHNRLDEAKQMFKFMVSKDCLP), 397-431 (NIQTYNTLINGFCKCKRVEDGVELFREMSQRGLVG), 432-466 (NTVTYTTIIQGFFQAGDCDSAQMVFKQMVSNRVPT), 467-501 (DIMTYSILLHGLCSYGKLDTALVIFKYLQKSEMEL), 502-532 (NIFIYNTMIEGMCKAGKVGEAWDLFCSLSIK), 534-568 (DVVTYNTMISGLCSKRLLQEADDLFRKMKEDGTLP), and 569-603 (NSGTYNTLIRANLRDCDRAASAELIKEMRSSGFVG).

It belongs to the PPR family. P subfamily.

This is Pentatricopeptide repeat-containing protein At1g63150 from Arabidopsis thaliana (Mouse-ear cress).